The following is a 258-amino-acid chain: Protein SAWADEE HOMEODOMAIN HOMOLOG 1 (258 aa).

An SAWADEE domain region spans residues 138-244 (AWYDVSSFLT…LVRYELDNTE (107 aa)). The Zn(2+) site is built by Cys191, His225, Cys230, and Cys232.

Associates with the RNA polymerase IV (Pol IV) complex. Interacts with NRPD1, NRPD2, NRPD3, NRPD3B, CLSY1 and CLSY2.

The protein resides in the nucleus. Functionally, involved in RNA-directed DNA methylation (RdDM). Required for the silencing of some endogenous RdDM targets and accumulation of 24-nt siRNAs, but not for the production of Pol V-dependent transcripts. Functions in transcriptional silencing through both DNA methylation-dependent and -independent pathways. Required for both maintenance and de-novo DNA methylation. Plays a role in the recruitment of Pol IV to genomic regions associated with K9 methylated histone H3 that are targets for RdDM. The protein is Protein SAWADEE HOMEODOMAIN HOMOLOG 1 (SHH1) of Arabidopsis thaliana (Mouse-ear cress).